We begin with the raw amino-acid sequence, 183 residues long: Large ribosomal subunit protein bL32m (183 aa).

Zn(2+)-binding residues include C99, C102, C112, and C115.

It belongs to the bacterial ribosomal protein bL32 family. Component of the mitochondrial large ribosomal subunit (mt-LSU).

Its subcellular location is the mitochondrion. Its function is as follows. Component of the mitochondrial large ribosomal subunit (mt-LSU). The mitochondrial ribosome (mitoribosome) is a large ribonucleoprotein complex responsible for the synthesis of proteins inside mitochondria. This is Large ribosomal subunit protein bL32m (mrpl-32) from Caenorhabditis elegans.